A 218-amino-acid chain; its full sequence is 3-dehydroquinate dehydratase (218 aa).

Residues 29-31 (EFR) and Arg56 contribute to the 3-dehydroquinate site. Residue His116 is the Proton donor/acceptor of the active site. Lys142 acts as the Schiff-base intermediate with substrate in catalysis. Residues Arg180, Ser200, and Gln204 each contribute to the 3-dehydroquinate site.

The protein belongs to the type-I 3-dehydroquinase family. Homodimer.

The enzyme catalyses 3-dehydroquinate = 3-dehydroshikimate + H2O. It functions in the pathway metabolic intermediate biosynthesis; chorismate biosynthesis; chorismate from D-erythrose 4-phosphate and phosphoenolpyruvate: step 3/7. Functionally, involved in the third step of the chorismate pathway, which leads to the biosynthesis of aromatic amino acids. Catalyzes the cis-dehydration of 3-dehydroquinate (DHQ) and introduces the first double bond of the aromatic ring to yield 3-dehydroshikimate. This is 3-dehydroquinate dehydratase from Methanococcus vannielii (strain ATCC 35089 / DSM 1224 / JCM 13029 / OCM 148 / SB).